A 1473-amino-acid chain; its full sequence is Ovostatin (1473 aa).

Residues 1–36 (MHCFLGREILSFFCLTVRKMWLKFILAILLLHAAAG) form the signal peptide. N-linked (GlcNAc...) asparagine glycosylation is found at Asn-67, Asn-82, Asn-89, Asn-191, Asn-342, Asn-403, Asn-527, Asn-588, Asn-757, Asn-1141, Asn-1221, Asn-1315, and Asn-1347.

The protein belongs to the protease inhibitor I39 (alpha-2-macroglobulin) family. In terms of assembly, homotetramer, which consists of two pairs of disulfide-linked chains. In terms of processing, lacks the thioester bond found in other members of this family. Post-translationally, glycosylated; contains 56 glucosamine units per subunit.

It is found in the secreted. Functionally, is able to inhibit all four classes of proteinases by a unique 'trapping' mechanism. This protein has a peptide stretch, called the 'bait region' which contains specific cleavage sites for different proteinases. When a proteinase cleaves the bait region, a conformational change is induced in the protein which traps the proteinase. The entrapped enzyme remains active against low molecular weight substrates (activity against high molecular weight substrates is greatly reduced). The chain is Ovostatin from Gallus gallus (Chicken).